The chain runs to 163 residues: MHKKYFIGTSILIAVFVVIFDQVTKYIIATTMKIGDSFEVIPHFLNITSHRNNGAAWGILSGKMTFFFIITIIILIALVYFFIKDAQYNLFMQVAISLLFAGALGNFIDRVLTGEVVDFIDTNIFGYDFPIFNIADSSLTIGVILIIIALLKDTSNKKEKEVK.

The next 3 membrane-spanning stretches (helical) occupy residues Ile-11–Thr-31, Lys-63–Ile-83, and Tyr-88–Ile-108. Active-site residues include Asp-118 and Asp-136. A helical membrane pass occupies residues Ile-131–Leu-151.

Belongs to the peptidase A8 family.

The protein localises to the cell membrane. It catalyses the reaction Release of signal peptides from bacterial membrane prolipoproteins. Hydrolyzes -Xaa-Yaa-Zaa-|-(S,diacylglyceryl)Cys-, in which Xaa is hydrophobic (preferably Leu), and Yaa (Ala or Ser) and Zaa (Gly or Ala) have small, neutral side chains.. The protein operates within protein modification; lipoprotein biosynthesis (signal peptide cleavage). Functionally, this protein specifically catalyzes the removal of signal peptides from prolipoproteins. The chain is Lipoprotein signal peptidase from Staphylococcus aureus (strain MRSA252).